Consider the following 258-residue polypeptide: Transcription factor TT2 (258 aa).

2 HTH myb-type domains span residues 11–63 and 64–118; these read REEL…KNYL and RPGI…RKRL. 2 DNA-binding regions (H-T-H motif) span residues 39-63 and 91-114; these read WSTL…KNYL and WSLI…NSNL. 47–54 contributes to the ATP binding site; the sequence is GLKRCGKS.

In terms of assembly, interacts with BHLH2/EGL3/MYC146, BHLH12/MYC1 and BHLH42/TT8. As to expression, expressed at a high level in immature siliques and at a lower level in flowers. Undetected in young seedlings, roots, leaves and inflorescence stems.

It is found in the nucleus. Functionally, transcription activator, when associated with BHLH2/EGL3/MYC146, BHLH12/MYC1, or BHLH42/TT8. Involved in the control of flavonoid late metabolism in developing siliques. Plays a key role in determining the tissue-specific activation of leucoanthocyanidin reductase (BANYULS). This Arabidopsis thaliana (Mouse-ear cress) protein is Transcription factor TT2 (TT2).